The sequence spans 147 residues: Large ribosomal subunit protein uL22c (147 aa).

This sequence belongs to the universal ribosomal protein uL22 family. Part of the 50S ribosomal subunit.

The protein localises to the plastid. It is found in the chloroplast. Functionally, this protein binds specifically to 23S rRNA. Its function is as follows. The globular domain of the protein is located near the polypeptide exit tunnel on the outside of the subunit, while an extended beta-hairpin is found that lines the wall of the exit tunnel in the center of the 70S ribosome. This is Large ribosomal subunit protein uL22c (rpl22) from Lolium perenne (Perennial ryegrass).